We begin with the raw amino-acid sequence, 271 residues long: Formamidopyrimidine-DNA glycosylase (271 aa).

P2 acts as the Schiff-base intermediate with DNA in catalysis. E3 acts as the Proton donor in catalysis. The active-site Proton donor; for beta-elimination activity is K57. H90, R109, and K151 together coordinate DNA. An FPG-type zinc finger spans residues 236-270 (HVYGRGSKSCTHCGNLLSEIRLGQRTTVFCGLCQT). Residue R260 is the Proton donor; for delta-elimination activity of the active site.

This sequence belongs to the FPG family. Monomer. Requires Zn(2+) as cofactor.

The enzyme catalyses Hydrolysis of DNA containing ring-opened 7-methylguanine residues, releasing 2,6-diamino-4-hydroxy-5-(N-methyl)formamidopyrimidine.. It catalyses the reaction 2'-deoxyribonucleotide-(2'-deoxyribose 5'-phosphate)-2'-deoxyribonucleotide-DNA = a 3'-end 2'-deoxyribonucleotide-(2,3-dehydro-2,3-deoxyribose 5'-phosphate)-DNA + a 5'-end 5'-phospho-2'-deoxyribonucleoside-DNA + H(+). Involved in base excision repair of DNA damaged by oxidation or by mutagenic agents. Acts as a DNA glycosylase that recognizes and removes damaged bases. Has a preference for oxidized purines, such as 7,8-dihydro-8-oxoguanine (8-oxoG). Has AP (apurinic/apyrimidinic) lyase activity and introduces nicks in the DNA strand. Cleaves the DNA backbone by beta-delta elimination to generate a single-strand break at the site of the removed base with both 3'- and 5'-phosphates. The protein is Formamidopyrimidine-DNA glycosylase of Shewanella denitrificans (strain OS217 / ATCC BAA-1090 / DSM 15013).